The primary structure comprises 506 residues: Dipeptide and tripeptide permease A (506 aa).

Topologically, residues 1–36 are cytoplasmic; sequence MSTANNNSESTESVSMNAFKQPKAFYLIFSIELWER. The helical transmembrane segment at 37–57 threads the bilayer; sequence FGYYGLQGIMAVYLVKMLGMS. Over 58–61 the chain is Periplasmic; sequence ETDS. A helical membrane pass occupies residues 62 to 82; it reads ITLFSSFSALVYGFVAIGGWL. The Cytoplasmic portion of the chain corresponds to 83 to 91; it reads GDKVLGTKR. A run of 2 helical transmembrane segments spans residues 92-112 and 113-133; these read VIVL…YSGH and SVAW…LFKA. Residues 134-155 are Cytoplasmic-facing; sequence NPSALLSTCYAKDDPRLDGAFT. Residues 156–176 form a helical membrane-spanning segment; it reads MYYMAVNIGSFFSMLATPVLA. At 177–180 the chain is on the periplasmic side; that stretch reads ANYG. Residues 181-201 traverse the membrane as a helical segment; that stretch reads WSVAFSLSVVGMILTLVNFMF. Topologically, residues 202–222 are cytoplasmic; that stretch reads CRKWVSTQGSQPDFQPINLKK. Residues 223-243 traverse the membrane as a helical segment; sequence LVITLAGIVVLVALSTWLLHN. Residues 244–248 are Periplasmic-facing; sequence QGVAR. The chain crosses the membrane as a helical span at residues 249-269; the sequence is WILTIISLAVVAIFIKEMLAV. Residues 270–276 lie on the Cytoplasmic side of the membrane; the sequence is SGAERRK. A helical membrane pass occupies residues 277 to 297; the sequence is MIVALLLMLEAVVFFVLYNQM. Residues 298-322 are Periplasmic-facing; sequence PTSLNFFAIRNVEHSILGFAFEPEQ. The helical transmembrane segment at 323-343 threads the bilayer; the sequence is YQALNPFWIMVASPLLAAVYN. The Cytoplasmic segment spans residues 344–354; the sequence is KMGDQLPMAHK. The chain crosses the membrane as a helical span at residues 355–375; the sequence is FAIGMVLCSGAFLVLPWGASM. Residues 376–385 lie on the Periplasmic side of the membrane; the sequence is ANEQGIVSVN. The helical transmembrane segment at 386 to 406 threads the bilayer; it reads WLILCYGLQSIGELMISGLGL. Topologically, residues 407-416 are cytoplasmic; it reads AMVAQLVPQR. A helical transmembrane segment spans residues 417-437; it reads LMGFIMGAWFLTSAGAAIIAG. Topologically, residues 438–461 are periplasmic; it reads YVANMMAVPENVVDPHVSLEVYSN. A helical transmembrane segment spans residues 462–482; sequence VFMQIGIVTGIIAVLMMLTAP. At 483-506 the chain is on the cytoplasmic side; the sequence is KLTRMTQDVATDVPADAATTTASA.

Belongs to the major facilitator superfamily. Proton-dependent oligopeptide transporter (POT/PTR) (TC 2.A.17) family. DtpA subfamily.

It localises to the cell inner membrane. Functionally, proton-dependent permease that transports di- and tripeptides. This is Dipeptide and tripeptide permease A from Pectobacterium carotovorum subsp. carotovorum (strain PC1).